Here is a 327-residue protein sequence, read N- to C-terminus: Putative hydroxymethylpyrimidine/phosphomethylpyrimidine kinase C18B5.05c (327 aa).

Q54 serves as a coordination point for 4-amino-5-hydroxymethyl-2-methylpyrimidine.

This sequence belongs to the ThiD family.

Its subcellular location is the cytoplasm. It is found in the nucleus. It carries out the reaction 4-amino-5-hydroxymethyl-2-methylpyrimidine + ATP = 4-amino-2-methyl-5-(phosphooxymethyl)pyrimidine + ADP + H(+). It catalyses the reaction 4-amino-2-methyl-5-(phosphooxymethyl)pyrimidine + ATP = 4-amino-2-methyl-5-(diphosphooxymethyl)pyrimidine + ADP. The protein operates within cofactor biosynthesis; thiamine diphosphate biosynthesis; 4-amino-2-methyl-5-diphosphomethylpyrimidine from 5-amino-1-(5-phospho-D-ribosyl)imidazole: step 2/3. It functions in the pathway cofactor biosynthesis; thiamine diphosphate biosynthesis; 4-amino-2-methyl-5-diphosphomethylpyrimidine from 5-amino-1-(5-phospho-D-ribosyl)imidazole: step 3/3. In terms of biological role, catalyzes the phosphorylation of hydroxymethylpyrimidine phosphate (HMP-P) to HMP-PP, and of HMP to HMP-P. The protein is Putative hydroxymethylpyrimidine/phosphomethylpyrimidine kinase C18B5.05c of Schizosaccharomyces pombe (strain 972 / ATCC 24843) (Fission yeast).